The chain runs to 200 residues: NADH-quinone oxidoreductase subunit C (200 aa).

This sequence belongs to the complex I 30 kDa subunit family. NDH-1 is composed of 14 different subunits. Subunits NuoB, C, D, E, F, and G constitute the peripheral sector of the complex.

The protein resides in the cell inner membrane. It carries out the reaction a quinone + NADH + 5 H(+)(in) = a quinol + NAD(+) + 4 H(+)(out). Its function is as follows. NDH-1 shuttles electrons from NADH, via FMN and iron-sulfur (Fe-S) centers, to quinones in the respiratory chain. The immediate electron acceptor for the enzyme in this species is believed to be ubiquinone. Couples the redox reaction to proton translocation (for every two electrons transferred, four hydrogen ions are translocated across the cytoplasmic membrane), and thus conserves the redox energy in a proton gradient. This chain is NADH-quinone oxidoreductase subunit C, found in Ralstonia nicotianae (strain ATCC BAA-1114 / GMI1000) (Ralstonia solanacearum).